Here is a 554-residue protein sequence, read N- to C-terminus: Glutamine--tRNA ligase (554 aa).

The 'HIGH' region signature appears at 34-44; it reads PEPNGYLHIGH. ATP contacts are provided by residues 35–37 and 41–47; these read EPN and HIGHAKS. Residues aspartate 67 and tyrosine 212 each coordinate L-glutamine. ATP is bound by residues threonine 231, 261–262, and 269–271; these read RL and MSK. The 'KMSKS' region motif lies at 268–272; sequence VMSKR. The segment at 317 to 324 is interaction with tRNA; sequence TKQDNTIE.

It belongs to the class-I aminoacyl-tRNA synthetase family. In terms of assembly, monomer.

It is found in the cytoplasm. The enzyme catalyses tRNA(Gln) + L-glutamine + ATP = L-glutaminyl-tRNA(Gln) + AMP + diphosphate. This is Glutamine--tRNA ligase from Escherichia coli O157:H7.